We begin with the raw amino-acid sequence, 99 residues long: Large ribosomal subunit protein bL21 (99 aa).

The protein belongs to the bacterial ribosomal protein bL21 family. As to quaternary structure, part of the 50S ribosomal subunit. Contacts protein L20.

This protein binds to 23S rRNA in the presence of protein L20. The sequence is that of Large ribosomal subunit protein bL21 from Mycoplasmopsis agalactiae (strain NCTC 10123 / CIP 59.7 / PG2) (Mycoplasma agalactiae).